The primary structure comprises 230 residues: Transmembrane 4 L6 family member 20 (230 aa).

Over 1–11 (MTCCEGWTSCN) the chain is Lumenal. Residues 12–32 (GFSLLVLLLLGVTLNAIPLIL) traverse the membrane as a helical segment. Residues 33 to 44 (NFVDEDQFFENP) lie on the Cytoplasmic side of the membrane. Residues 45-65 (ISCFEWWFPGIIGAGVMAIPA) form a helical membrane-spanning segment. Residues 66–83 (TTMSLAARKRACCNNKTG) are Lumenal-facing. A helical membrane pass occupies residues 84 to 104 (MFLSSLLNAITVIGAAYCLLV). At 105–185 (SIQALAEGPL…HFNSIENQHR (81 aa)) the chain is on the cytoplasmic side. Residues 186–206 (IIHFSVFLGLLLVGILEILFG) traverse the membrane as a helical segment. Residues 207–230 (LSQIIIGFFGCLCGGVSNGRSQIV) lie on the Lumenal side of the membrane.

This sequence belongs to the L6 tetraspanin family. In terms of processing, glycosylated at Asn-132 in presence of ceramide which inverts the orientation of TM4SF20 in membranes exposing these residues to the endoplasmic reticulum lumen. Post-translationally, cleaved by signal peptidase at Ser-14 but the peptide does not act as a signal peptide. Cleavage is inhibited by ceramide which inverts the orientation of TM4SF20 in membranes exposing the N-terminus to the cytosol and not to the endoplasmic reticulum lumen.

The protein localises to the membrane. It localises to the endoplasmic reticulum membrane. In terms of biological role, polytopic transmembrane protein. Inhibits regulated intramembrane proteolysis (RIP) of CREB3L1, inhibiting its activation and the induction of collagen synthesis. In response to ceramide, which alters TM4SF20 membrane topology, stimulates RIP activation of CREB3L1. Ceramide reverses the direction through which transmembrane helices are translocated into the endoplasmic reticulum membrane during translation of TM4SF20, this mechanism is called 'regulated alternative translocation' (RAT) and regulates the function of the transmembrane protein. The chain is Transmembrane 4 L6 family member 20 (TM4SF20) from Bos taurus (Bovine).